Here is a 454-residue protein sequence, read N- to C-terminus: uncharacterized protein (454 aa).

Residues 364–405 (CSRPGCDAPAYHSEVHHVTPWTTTHRTDINDLTLACGPDNRL) enclose the HNH domain. A disordered region spans residues 415–434 (NAKGDTEWLPPAHLDHGQPR).

It belongs to the Rv1128c/1148c/1588c/1702c/1945/3466 family.

This is an uncharacterized protein from Mycobacterium tuberculosis (strain CDC 1551 / Oshkosh).